Here is a 242-residue protein sequence, read N- to C-terminus: Large ribosomal subunit protein uL1 (242 aa).

It belongs to the universal ribosomal protein uL1 family. In terms of assembly, part of the 50S ribosomal subunit.

Binds directly to 23S rRNA. The L1 stalk is quite mobile in the ribosome, and is involved in E site tRNA release. Functionally, protein L1 is also a translational repressor protein, it controls the translation of the L11 operon by binding to its mRNA. The protein is Large ribosomal subunit protein uL1 of Streptomyces sp. (strain FRI-5).